A 453-amino-acid chain; its full sequence is MALNFSHRPFSSHLSEEPMMIANGNWCSSFDNGRKNTGGDASSVDILDVLPSDPFGMDINNTFTAITGWLEDLEDDYNNQYGRRRRDDIWIGDGNRQQLFAGLSFFWNNAMQFQSSGYSYGSESLFGGAFDGSLFSTCKFPESSGENNGFGGALDGDGSCHGAFISASSVDEVLSHENARNGEVVGSSDRCNNGEEDAYVHPAIGFCLYHLRGKDLLSVSMVCKSLHTTVCDDTLLWKHIHICRPLNEKITEEALLHLTERAQGTMQCLRIVDCCRITDDCLKRVVARNRQVVKIGVPGCTRITIDGILSVLRDLKSAGKLQVKHLQLRGLFGVTKDHYDELIDLLNIDNKVKQTIQKPRFYHRGEACVSCDDDRALDIEMCPKCQNFKLVYDCPAEDCKGKKKGSEECRACSLCIQRCYHCGRCIIDTEYEEMFCLELLCAVCSKPTPKLTL.

The 71-residue stretch at 34 to 104 folds into the F-box; degenerate domain; the sequence is RKNTGGDASS…NRQQLFAGLS (71 aa).

In terms of assembly, part of a SCF (ASK-cullin-F-box) protein ligase complex. Interacts with CUL1, SKP1A/ASK1 and SPK1B/ASK2.

It participates in protein modification; protein ubiquitination. Component of SCF(ASK-cullin-F-box) E3 ubiquitin ligase complexes, which may mediate the ubiquitination and subsequent proteasomal degradation of target proteins. The sequence is that of F-box protein SKIP14 (SKIP14) from Arabidopsis thaliana (Mouse-ear cress).